A 299-amino-acid chain; its full sequence is Large ribosomal subunit protein uL18 (299 aa).

This sequence belongs to the universal ribosomal protein uL18 family. Component of the large ribosomal subunit (LSU). Interacts with Fmr1 to form the RNA-induced silencing complex (RISC), a ribonucleoprotein (RNP) complex involved in translation regulation, other components of the complex are Rm62, RpL11, AGO2 and Dcr-1.

The protein resides in the cytoplasm. Its subcellular location is the nucleus. In terms of biological role, component of the ribosome, a large ribonucleoprotein complex responsible for the synthesis of proteins in the cell. The small ribosomal subunit (SSU) binds messenger RNAs (mRNAs) and translates the encoded message by selecting cognate aminoacyl-transfer RNA (tRNA) molecules. The large subunit (LSU) contains the ribosomal catalytic site termed the peptidyl transferase center (PTC), which catalyzes the formation of peptide bonds, thereby polymerizing the amino acids delivered by tRNAs into a polypeptide chain. The nascent polypeptides leave the ribosome through a tunnel in the LSU and interact with protein factors that function in enzymatic processing, targeting, and the membrane insertion of nascent chains at the exit of the ribosomal tunnel. The protein is Large ribosomal subunit protein uL18 (RpL5) of Drosophila melanogaster (Fruit fly).